The primary structure comprises 684 residues: Glycine--tRNA ligase beta subunit (684 aa).

This sequence belongs to the class-II aminoacyl-tRNA synthetase family. In terms of assembly, tetramer of two alpha and two beta subunits.

Its subcellular location is the cytoplasm. The catalysed reaction is tRNA(Gly) + glycine + ATP = glycyl-tRNA(Gly) + AMP + diphosphate. The sequence is that of Glycine--tRNA ligase beta subunit from Pseudomonas aeruginosa (strain UCBPP-PA14).